A 339-amino-acid polypeptide reads, in one-letter code: Geranylgeranyl transferase type-2 subunit beta (339 aa).

Threonine 11 is subject to Phosphothreonine. PFTB repeat units follow at residues 28–69 (LEKH…DLMG), 76–117 (REEI…TLYD), 124–165 (VDKV…ALLG), 172–213 (VEKA…AITS), 220–261 (SDLL…KIIG), and 268–310 (REKL…SLLG). Residues 198 to 200 (HAG) and 240 to 243 (RPEK) contribute to the geranylgeranyl diphosphate site. Zn(2+)-binding residues include aspartate 246 and cysteine 248. Residues tyrosine 249 and 249–252 (YSWW) contribute to the geranylgeranyl diphosphate site. Histidine 298 provides a ligand contact to Zn(2+).

The protein belongs to the protein prenyltransferase subunit beta family. Heterotrimer composed of RABGGTA, RABGGTB and CHM; within this trimer, RABGGTA and RABGGTB form the catalytic component B, while CHM (component A) mediates peptide substrate binding. The Rab GGTase dimer (RGGT) interacts with CHM (component A) prior to Rab protein binding; the association is stabilized by geranylgeranyl pyrophosphate (GGpp). The CHM:RGGT:Rab complex is destabilized by GGpp. Interaction of RABGGTB with prenylated PTP4A2 precludes its association with RABGGTA and inhibits enzyme activity. Interacts with CHODL. Interacts with non-phosphorylated form of RAB8A; phosphorylation of RAB8A at 'Thr-72' disrupts this interaction. Zn(2+) is required as a cofactor. In terms of tissue distribution, ubiquitous. Detected in all the major organs in adult animals.

The enzyme catalyses geranylgeranyl diphosphate + L-cysteinyl-[protein] = S-geranylgeranyl-L-cysteinyl-[protein] + diphosphate. With respect to regulation, the enzymatic reaction requires the aid of a Rab escort protein (also called component A), such as CHM. Catalyzes the transfer of a geranylgeranyl moiety from geranylgeranyl diphosphate to both cysteines of Rab proteins with the C-terminal sequence -XXCC, -XCXC and -CCXX, such as RAB1A, RAB3A, RAB5A and RAB7A. This is Geranylgeranyl transferase type-2 subunit beta (Rabggtb) from Mus musculus (Mouse).